The following is a 451-amino-acid chain: Enolase (451 aa).

Residue Gln163 coordinates (2R)-2-phosphoglycerate. The Proton donor role is filled by Glu205. The Mg(2+) site is built by Asp258, Glu308, and Asp335. The (2R)-2-phosphoglycerate site is built by Lys360, Arg389, Ser390, and Lys411. Lys360 serves as the catalytic Proton acceptor.

This sequence belongs to the enolase family. It depends on Mg(2+) as a cofactor.

Its subcellular location is the cytoplasm. It is found in the secreted. The protein resides in the cell surface. The catalysed reaction is (2R)-2-phosphoglycerate = phosphoenolpyruvate + H2O. Its pathway is carbohydrate degradation; glycolysis; pyruvate from D-glyceraldehyde 3-phosphate: step 4/5. Its function is as follows. Catalyzes the reversible conversion of 2-phosphoglycerate (2-PG) into phosphoenolpyruvate (PEP). It is essential for the degradation of carbohydrates via glycolysis. The polypeptide is Enolase (Mycoplasma mycoides subsp. mycoides SC (strain CCUG 32753 / NCTC 10114 / PG1)).